The following is a 147-amino-acid chain: D-aminoacyl-tRNA deacylase (147 aa).

The short motif at 136 to 137 (GP) is the Gly-cisPro motif, important for rejection of L-amino acids element.

It belongs to the DTD family. As to quaternary structure, homodimer.

The protein resides in the cytoplasm. It carries out the reaction glycyl-tRNA(Ala) + H2O = tRNA(Ala) + glycine + H(+). The catalysed reaction is a D-aminoacyl-tRNA + H2O = a tRNA + a D-alpha-amino acid + H(+). Functionally, an aminoacyl-tRNA editing enzyme that deacylates mischarged D-aminoacyl-tRNAs. Also deacylates mischarged glycyl-tRNA(Ala), protecting cells against glycine mischarging by AlaRS. Acts via tRNA-based rather than protein-based catalysis; rejects L-amino acids rather than detecting D-amino acids in the active site. By recycling D-aminoacyl-tRNA to D-amino acids and free tRNA molecules, this enzyme counteracts the toxicity associated with the formation of D-aminoacyl-tRNA entities in vivo and helps enforce protein L-homochirality. The chain is D-aminoacyl-tRNA deacylase from Persephonella marina (strain DSM 14350 / EX-H1).